The sequence spans 781 residues: MNNKKNEKTTNNKEIANVLVTRGIVFYPNTKIRIEIGREKSIAAINDSKEKKQNMIVVSQENPSIDSPSKNEIFTVGTLCSFEIDNKHPDGSYSIIFTGIKRVKINKLSEKASDGEIKTKFFYADYSEIEEDTKLSKSNEEAIKDLHAKFENELNNLTFFPKKDLALSKENRHTIVDWLPIALKFSLEEKQQLLEEPSLSKRIEKILSFTIDERVSQKIDSEISKKINTNLSKQQKEFYLRERVRAIKEELGDISSKEDDAESIRDRVRNNPYPEHIKKRILSEVNKLESSSNSNEYSMSKTYIDWLIDLPYWQKTDDVDSLADVENVLNNNHYGLEKVKERIIEYLAVRMKSKSAKGSIICLVGPPGVGKTSLAQSIAEALKKKFVKVSLGGMRDEAELKGHRKTYIGAMPGRIIKAMSKAGVVNPVFLLDEIDKLGSDHKGDPASAMLDILDPEQNNRFSDNYIEEDYDLSNVLFIATANYEENIPEPLHDRLEIIRLSSYTENEKLSIAKNYLVKKILVESALKKDELKFTDDGLSYIIKRYTREAGVREVERAIRQIARKFVVRQQKEKLTSQTIGVEEVKYYLKKEIYDYTKKDKEYMPGVVNGMAYTTAGGDLLPIEATFAPGKGKIEITGNLKETMKESVNVALGYVKTNAVKFGIDPKIFGEIDLHVHVPSGGIPKDGPSAGIALTTAILSALKNVKIPSNVAMTGEITLRGRVLIIGGVKEKTISAYRGGANDIFMPKEDERYLDDVPEEVRSKIKITLVDTYDDVYNRLFK.

One can recognise a Lon N-terminal domain in the interval 16-214; sequence ANVLVTRGIV…KILSFTIDER (199 aa). 365 to 372 is a binding site for ATP; the sequence is GPPGVGKT. In terms of domain architecture, Lon proteolytic spans 601–781; sequence EYMPGVVNGM…YDDVYNRLFK (181 aa). Residues S688 and K731 contribute to the active site.

Belongs to the peptidase S16 family. In terms of assembly, homohexamer. Organized in a ring with a central cavity.

The protein resides in the cytoplasm. It catalyses the reaction Hydrolysis of proteins in presence of ATP.. Its function is as follows. ATP-dependent serine protease that mediates the selective degradation of mutant and abnormal proteins as well as certain short-lived regulatory proteins. Required for cellular homeostasis and for survival from DNA damage and developmental changes induced by stress. Degrades polypeptides processively to yield small peptide fragments that are 5 to 10 amino acids long. Binds to DNA in a double-stranded, site-specific manner. The polypeptide is Lon protease (Malacoplasma penetrans (strain HF-2) (Mycoplasma penetrans)).